A 208-amino-acid polypeptide reads, in one-letter code: Na(+)-translocating NADH-quinone reductase subunit D (208 aa).

A run of 5 helical transmembrane segments spans residues 42-62, 70-90, 103-123, 131-151, and 178-198; these read IVMT…ISLI, VRII…DQIL, VFVG…AFAM, FVDG…VAFI, and NGLF…IWGI.

The protein belongs to the NqrDE/RnfAE family. Composed of six subunits; NqrA, NqrB, NqrC, NqrD, NqrE and NqrF.

Its subcellular location is the cell inner membrane. It carries out the reaction a ubiquinone + n Na(+)(in) + NADH + H(+) = a ubiquinol + n Na(+)(out) + NAD(+). Functionally, NQR complex catalyzes the reduction of ubiquinone-1 to ubiquinol by two successive reactions, coupled with the transport of Na(+) ions from the cytoplasm to the periplasm. NqrA to NqrE are probably involved in the second step, the conversion of ubisemiquinone to ubiquinol. The chain is Na(+)-translocating NADH-quinone reductase subunit D from Pasteurella multocida (strain Pm70).